The chain runs to 197 residues: Probable GTP-binding protein EngB (197 aa).

An EngB-type G domain is found at 22–197 (TGVEVAFAGR…LKEKLDIWYQ (176 aa)). Residues 30–37 (GRSNAGKS), 57–61 (GRTQL), 75–78 (DLPG), 142–145 (TKAD), and 177–179 (FSS) contribute to the GTP site. 2 residues coordinate Mg(2+): S37 and T59.

Belongs to the TRAFAC class TrmE-Era-EngA-EngB-Septin-like GTPase superfamily. EngB GTPase family. Requires Mg(2+) as cofactor.

Its function is as follows. Necessary for normal cell division and for the maintenance of normal septation. The chain is Probable GTP-binding protein EngB from Francisella philomiragia subsp. philomiragia (strain ATCC 25017 / CCUG 19701 / FSC 153 / O#319-036).